A 940-amino-acid polypeptide reads, in one-letter code: Bifunctional uridylyltransferase/uridylyl-removing enzyme (940 aa).

Positions 1–379 are uridylyltransferase; that stretch reads MPRRLRPTRL…PGARPKRKAL (379 aa). Positions 380–736 are uridylyl-removing; the sequence is DVEGFYEDGG…GQVRPGSNAA (357 aa). One can recognise an HD domain in the interval 496 to 618; that stretch reads VDEHTLRAVG…VENPERLRLL (123 aa). ACT domains follow at residues 737 to 821 and 848 to 929; these read EVVI…PRRG and VVEA…AARP.

Belongs to the GlnD family. Mg(2+) is required as a cofactor.

The catalysed reaction is [protein-PII]-L-tyrosine + UTP = [protein-PII]-uridylyl-L-tyrosine + diphosphate. The enzyme catalyses [protein-PII]-uridylyl-L-tyrosine + H2O = [protein-PII]-L-tyrosine + UMP + H(+). Its activity is regulated as follows. Uridylyltransferase (UTase) activity is inhibited by glutamine, while glutamine activates uridylyl-removing (UR) activity. Functionally, modifies, by uridylylation and deuridylylation, the PII regulatory proteins (GlnB and homologs), in response to the nitrogen status of the cell that GlnD senses through the glutamine level. Under low glutamine levels, catalyzes the conversion of the PII proteins and UTP to PII-UMP and PPi, while under higher glutamine levels, GlnD hydrolyzes PII-UMP to PII and UMP (deuridylylation). Thus, controls uridylylation state and activity of the PII proteins, and plays an important role in the regulation of nitrogen assimilation and metabolism. The polypeptide is Bifunctional uridylyltransferase/uridylyl-removing enzyme (Caulobacter vibrioides (strain ATCC 19089 / CIP 103742 / CB 15) (Caulobacter crescentus)).